We begin with the raw amino-acid sequence, 290 residues long: Small ribosomal subunit biogenesis GTPase RsgA (290 aa).

One can recognise a CP-type G domain in the interval 62–213; it reads KNSLVRPPIV…IADTPGFSSL (152 aa). Residues 111-114 and 156-164 each bind GTP; these read SKMD and GQTGVGKST. Residues C237, C242, H244, and C250 each coordinate Zn(2+).

The protein belongs to the TRAFAC class YlqF/YawG GTPase family. RsgA subfamily. In terms of assembly, monomer. Associates with 30S ribosomal subunit, binds 16S rRNA. The cofactor is Zn(2+).

It localises to the cytoplasm. One of several proteins that assist in the late maturation steps of the functional core of the 30S ribosomal subunit. Helps release RbfA from mature subunits. May play a role in the assembly of ribosomal proteins into the subunit. Circularly permuted GTPase that catalyzes slow GTP hydrolysis, GTPase activity is stimulated by the 30S ribosomal subunit. The sequence is that of Small ribosomal subunit biogenesis GTPase RsgA from Streptococcus pyogenes serotype M6 (strain ATCC BAA-946 / MGAS10394).